Here is a 302-residue protein sequence, read N- to C-terminus: Sulfate adenylyltransferase subunit 2 (302 aa).

This sequence belongs to the PAPS reductase family. CysD subfamily. In terms of assembly, heterodimer composed of CysD, the smaller subunit, and CysN.

It catalyses the reaction sulfate + ATP + H(+) = adenosine 5'-phosphosulfate + diphosphate. It participates in sulfur metabolism; hydrogen sulfide biosynthesis; sulfite from sulfate: step 1/3. In terms of biological role, with CysN forms the ATP sulfurylase (ATPS) that catalyzes the adenylation of sulfate producing adenosine 5'-phosphosulfate (APS) and diphosphate, the first enzymatic step in sulfur assimilation pathway. APS synthesis involves the formation of a high-energy phosphoric-sulfuric acid anhydride bond driven by GTP hydrolysis by CysN coupled to ATP hydrolysis by CysD. This chain is Sulfate adenylyltransferase subunit 2, found in Photorhabdus laumondii subsp. laumondii (strain DSM 15139 / CIP 105565 / TT01) (Photorhabdus luminescens subsp. laumondii).